Consider the following 154-residue polypeptide: C-type lectin 16 (154 aa).

The N-terminal stretch at M1–S20 is a signal peptide. The C-type lectin domain occupies D27–E152. Cystine bridges form between C46–C151 and C123–C143.

In terms of assembly, (Microbial infection) Interacts with non-structural protein 1 of dengue virus type 2. Interacts with envelope protein E of dengue virus type 2. As to expression, female salivary gland (at protein level). Not detected in female carcass without salivary glands (at protein level). Not detected in male tissues (at protein level).

The protein localises to the secreted. Putative lectin. May have a regulatory role in mosquito immunity. Probably suppresses replication of dengue virus type 2 in mosquito salivary glands. This is C-type lectin 16 from Aedes aegypti (Yellowfever mosquito).